The following is a 443-amino-acid chain: D-lactate dehydrogenase (443 aa).

Residues 1-182 (MSWIDELSKI…GGKTIKNSSG (182 aa)) lie on the Extracellular side of the membrane. One can recognise an FAD-binding PCMH-type domain in the interval 32 to 209 (RAAENFVVVK…TKATIRLFPQ (178 aa)). The chain crosses the membrane as a helical span at residues 183 to 203 (YSLLHLLVGSEGTLAVITKAT). Residues 204–383 (IRLFPQMRDM…WEKSYFEFRK (180 aa)) lie on the Cytoplasmic side of the membrane. Residues 384–404 (SLLSLAVSLGGVISGEHGIGA) form a helical membrane-spanning segment. At 405–443 (VKLSELEELFPEQFELMRQIKLLFDPKNILNPGKVVRKL) the chain is on the extracellular side.

This sequence belongs to the FAD-binding oxidoreductase/transferase type 4 family. Requires FAD as cofactor. Zn(2+) serves as cofactor.

The protein localises to the cell membrane. The catalysed reaction is (R)-lactate + A = pyruvate + AH2. In terms of biological role, catalyzes the dehydrogenation of (R)-lactate (D-lactate) to pyruvate. Is likely involved in the utilization of D-lactate as a sole source for both carbon and electrons for dissimilatory sulfate reduction. Cannot use L-lactate as substrate, and NAD(+), horse cytochrome c, methylene blue or dimethylnaphthoquinone as acceptors. Active in vitro with artificial electron acceptors such as 2,6-dichlorophenolindophenol (DCPIP); the physiological acceptor is not known, but potential acceptors include cytochromes or quinones. The sequence is that of D-lactate dehydrogenase from Archaeoglobus fulgidus (strain ATCC 49558 / DSM 4304 / JCM 9628 / NBRC 100126 / VC-16).